The sequence spans 963 residues: Integrator complex subunit 4 (963 aa).

Lys26 carries the post-translational modification N6-acetyllysine. HEAT repeat units lie at residues Ala66–Phe105, Gln145–Ser183, Gly190–Lys228, Leu229–Tyr263, Ile277–Ser313, Asn369–Ser405, Pro406–Leu444, and Glu446–Leu484. Lys791 is covalently cross-linked (Glycyl lysine isopeptide (Lys-Gly) (interchain with G-Cter in SUMO1); alternate). Residue Lys791 forms a Glycyl lysine isopeptide (Lys-Gly) (interchain with G-Cter in SUMO2); alternate linkage.

It belongs to the Integrator subunit 4 family. In terms of assembly, component of the Integrator complex, composed of core subunits INTS1, INTS2, INTS3, INTS4, INTS5, INTS6, INTS7, INTS8, INTS9/RC74, INTS10, INTS11/CPSF3L, INTS12, INTS13, INTS14 and INTS15. The core complex associates with protein phosphatase 2A subunits PPP2CA and PPP2R1A, to form the Integrator-PP2A (INTAC) complex. INTS4 is part of the RNA endonuclease subcomplex, composed of INTS4, INTS9, INTS11 and inositol hexakisphosphate (InsP6). Interacts with BRAT1; interaction is required for the assembly of the RNA endonuclease subcomplex.

The protein resides in the nucleus. The protein localises to the cytoplasm. Component of the integrator complex, a multiprotein complex that terminates RNA polymerase II (Pol II) transcription in the promoter-proximal region of genes. The integrator complex provides a quality checkpoint during transcription elongation by driving premature transcription termination of transcripts that are unfavorably configured for transcriptional elongation: the complex terminates transcription by (1) catalyzing dephosphorylation of the C-terminal domain (CTD) of Pol II subunit POLR2A/RPB1 and SUPT5H/SPT5, (2) degrading the exiting nascent RNA transcript via endonuclease activity and (3) promoting the release of Pol II from bound DNA. The integrator complex is also involved in terminating the synthesis of non-coding Pol II transcripts, such as enhancer RNAs (eRNAs), small nuclear RNAs (snRNAs), telomerase RNAs and long non-coding RNAs (lncRNAs). Within the integrator complex, INTS4 acts as an scaffold that links INTS9 and INTS11. Mediates recruitment of cytoplasmic dynein to the nuclear envelope, probably as component of the integrator complex. The chain is Integrator complex subunit 4 from Homo sapiens (Human).